Here is a 299-residue protein sequence, read N- to C-terminus: Ankyrin repeat domain-containing protein 54 (299 aa).

Positions 1–27 (MAATGGGAEDESRSGRSSSEGECAVAP) are disordered. Ala2 carries the post-translational modification N-acetylalanine. At Ser62 the chain carries Phosphoserine. The Nuclear localization signal (NLS) signature appears at 98–116 (RRLGPTGKEVHALKRLRDS). ANK repeat units lie at residues 108–137 (HALKRLRDSANANDIETVQQLLEDGADPCA), 141–170 (KGRTALHFASCNGNDQIVQLLLDHGADPNQ), 174–203 (LGNTPLHLAACTNHVPVITTLLRGGARVDA), and 207–239 (AGRTPLHLAKSKLNILQEGHSQCLEAVRLEVKQ). Residues 140–240 (DKGRTALHFA…EAVRLEVKQI (101 aa)) form an LYN-binding region. The Nuclear export signal (NES) motif lies at 282 to 292 (LLASFTSLSLQ).

As to quaternary structure, interacts (via ankyrin repeat region) with LYN (via SH3-domain) in an activation-independent status of LYN. Forms a multiprotein complex with LYN and HCLS1. Interacts with TSN2, VAV1, DBNL and LASP1.

The protein resides in the nucleus. Its subcellular location is the cytoplasm. The protein localises to the midbody. In terms of biological role, plays an important role in regulating intracellular signaling events associated with erythroid terminal differentiation. This is Ankyrin repeat domain-containing protein 54 (Ankrd54) from Rattus norvegicus (Rat).